A 196-amino-acid polypeptide reads, in one-letter code: Charged multivesicular body protein 1a (196 aa).

The residue at position 1 (Met1) is an N-acetylmethionine. Residues 5–42 adopt a coiled-coil conformation; it reads LFQLKFTAKQLEKLAKKAEKDSKAEQAKVKKALQQKNV. Ser101 bears the Phosphoserine mark. Positions 102–124 form a coiled coil; that stretch reads AMDLQKVSAVMDRFEQQVQNLDV. Ser173 bears the Phosphoserine mark. The MIT-interacting motif motif lies at 185-195; it reads DQLSRRLAALR.

The protein belongs to the SNF7 family. Probable peripherally associated component of the endosomal sorting required for transport complex III (ESCRT-III). ESCRT-III components are thought to multimerize to form a flat lattice on the perimeter membrane of the endosome. Several assembly forms of ESCRT-III may exist that interact and act sequentially. Self-associates. Interacts with CHMP1B. Interacts with VPS4A. Interacts with VPS4B. Interacts with PHF1. Interacts with IST1. Interacts with MITD1. In terms of tissue distribution, highly expressed in adult heart, kidney and liver. Expressed at lower levels in adult colon, spleen, lung, brain, testis and muscle. Also expressed in myoblasts and embryo fibroblasts.

The protein resides in the cytoplasm. Its subcellular location is the endosome membrane. The protein localises to the nucleus matrix. Functionally, probable peripherally associated component of the endosomal sorting required for transport complex III (ESCRT-III) which is involved in multivesicular bodies (MVBs) formation and sorting of endosomal cargo proteins into MVBs. MVBs contain intraluminal vesicles (ILVs) that are generated by invagination and scission from the limiting membrane of the endosome and mostly are delivered to lysosomes enabling degradation of membrane proteins, such as stimulated growth factor receptors, lysosomal enzymes and lipids. The MVB pathway appears to require the sequential function of ESCRT-O, -I,-II and -III complexes. ESCRT-III proteins mostly dissociate from the invaginating membrane before the ILV is released. The ESCRT machinery also functions in topologically equivalent membrane fission events, such as the terminal stages of cytokinesis. ESCRT-III proteins are believed to mediate the necessary vesicle extrusion and/or membrane fission activities, possibly in conjunction with the AAA ATPase VPS4. Involved in cytokinesis. Involved in recruiting VPS4A and/or VPS4B to the midbody of dividing cells. May also be involved in chromosome condensation. Targets the Polycomb group (PcG) protein BMI1/PCGF4 to regions of condensed chromatin. May play a role in stable cell cycle progression and in PcG gene silencing. The sequence is that of Charged multivesicular body protein 1a (Chmp1a) from Mus musculus (Mouse).